Reading from the N-terminus, the 420-residue chain is UDP-N-acetylglucosamine 1-carboxyvinyltransferase (420 aa).

22–23 (KN) lines the phosphoenolpyruvate pocket. A UDP-N-acetyl-alpha-D-glucosamine-binding site is contributed by Arg94. Cys118 functions as the Proton donor in the catalytic mechanism. Cys118 is subject to 2-(S-cysteinyl)pyruvic acid O-phosphothioketal. Asp307 and Ile329 together coordinate UDP-N-acetyl-alpha-D-glucosamine.

Belongs to the EPSP synthase family. MurA subfamily.

It localises to the cytoplasm. The enzyme catalyses phosphoenolpyruvate + UDP-N-acetyl-alpha-D-glucosamine = UDP-N-acetyl-3-O-(1-carboxyvinyl)-alpha-D-glucosamine + phosphate. It functions in the pathway cell wall biogenesis; peptidoglycan biosynthesis. Cell wall formation. Adds enolpyruvyl to UDP-N-acetylglucosamine. The chain is UDP-N-acetylglucosamine 1-carboxyvinyltransferase from Granulibacter bethesdensis (strain ATCC BAA-1260 / CGDNIH1).